We begin with the raw amino-acid sequence, 373 residues long: Ferroptosis suppressor protein 1 (373 aa).

Gly-2 carries the N-myristoyl glycine lipid modification. The chain crosses the membrane as a helical span at residues Val-13 to Leu-29. Residues Gly-17–Gly-21, Arg-53, and Val-81 each bind 6-hydroxy-FAD. Position 167 is an N6-acetyllysine (Lys-167). Asp-284 contributes to the 6-hydroxy-FAD binding site.

It belongs to the FAD-dependent oxidoreductase family. The cofactor is 6-hydroxy-FAD. Post-translationally, N-myristoylation at Gly-2 mediates the recruitment to lipid droplets and plasma membrane. In terms of processing, acetylation at Lys-167 prevents AIFM2 ubiquitination and degradation, thereby inhibiting ferroptosis. KAT2B mediates acetylation at Lys-167, while HDAC3 removes it. Ubiquitinated. AIFM2 undergoes 'Lys-29'-ubiquitination and proteasomal degradation, which is inhibited by acetylation at Lys-167.

The protein resides in the lipid droplet. It localises to the cell membrane. Its subcellular location is the cytoplasm. The protein localises to the mitochondrion membrane. It is found in the nucleus. The catalysed reaction is ubiquinone-10 + NADH + H(+) = ubiquinol-10 + NAD(+). It carries out the reaction phylloquinone + NADH + H(+) = phylloquinol + NAD(+). The enzyme catalyses menaquinone-4 + NADH + H(+) = menaquinol-4 + NAD(+). It catalyses the reaction menadione + NADH + H(+) = menadiol + NAD(+). With respect to regulation, the modification by 4-hydroxy-2-nonenal (HNE) adduction in mitochondria results in loss of the oxidoreductase activity and activation of a novel function in mitochondrial oxidative stress signaling. Functionally, a NAD(P)H-dependent oxidoreductase that acts as a key inhibitor of ferroptosis. At the plasma membrane, catalyzes reduction of coenzyme Q/ubiquinone-10 to ubiquinol-10, a lipophilic radical-trapping antioxidant that prevents lipid oxidative damage and consequently ferroptosis. Acts in parallel to GPX4 to suppress phospholipid peroxidation and ferroptosis. This anti-ferroptotic function is independent of cellular glutathione levels. Also acts as a potent radical-trapping antioxidant by mediating warfarin-resistant vitamin K reduction in the canonical vitamin K cycle: catalyzes NAD(P)H-dependent reduction of vitamin K (phylloquinone, menaquinone-4 and menadione) to hydroquinone forms. Hydroquinones act as potent radical-trapping antioxidants inhibitor of phospholipid peroxidation and ferroptosis. May play a role in mitochondrial stress signaling. Upon oxidative stress, associates with the lipid peroxidation end product 4-hydroxy-2-nonenal (HNE) forming a lipid adduct devoid of oxidoreductase activity, which then translocates from mitochondria into the nucleus triggering DNA damage and cell death. The polypeptide is Ferroptosis suppressor protein 1 (AIFM2) (Taeniopygia guttata (Zebra finch)).